The sequence spans 158 residues: NADH-quinone oxidoreductase subunit B (158 aa).

Residues cysteine 37, cysteine 38, cysteine 102, and cysteine 132 each contribute to the [4Fe-4S] cluster site.

The protein belongs to the complex I 20 kDa subunit family. NDH-1 is composed of 14 different subunits. Subunits NuoB, C, D, E, F, and G constitute the peripheral sector of the complex. It depends on [4Fe-4S] cluster as a cofactor.

The protein resides in the cell inner membrane. It carries out the reaction a quinone + NADH + 5 H(+)(in) = a quinol + NAD(+) + 4 H(+)(out). NDH-1 shuttles electrons from NADH, via FMN and iron-sulfur (Fe-S) centers, to quinones in the respiratory chain. Couples the redox reaction to proton translocation (for every two electrons transferred, four hydrogen ions are translocated across the cytoplasmic membrane), and thus conserves the redox energy in a proton gradient. This Bordetella avium (strain 197N) protein is NADH-quinone oxidoreductase subunit B.